Reading from the N-terminus, the 102-residue chain is Small ribosomal subunit protein uS10 (102 aa).

The protein belongs to the universal ribosomal protein uS10 family. In terms of assembly, part of the 30S ribosomal subunit.

In terms of biological role, involved in the binding of tRNA to the ribosomes. This chain is Small ribosomal subunit protein uS10, found in Streptococcus pyogenes serotype M3 (strain SSI-1).